A 309-amino-acid chain; its full sequence is Ribosomal RNA small subunit methyltransferase H (309 aa).

Residues 33-35 (GGH), D53, F79, D100, and Q107 each bind S-adenosyl-L-methionine.

The protein belongs to the methyltransferase superfamily. RsmH family.

The protein localises to the cytoplasm. It carries out the reaction cytidine(1402) in 16S rRNA + S-adenosyl-L-methionine = N(4)-methylcytidine(1402) in 16S rRNA + S-adenosyl-L-homocysteine + H(+). Its function is as follows. Specifically methylates the N4 position of cytidine in position 1402 (C1402) of 16S rRNA. The chain is Ribosomal RNA small subunit methyltransferase H from Clostridium botulinum (strain Langeland / NCTC 10281 / Type F).